Consider the following 365-residue polypeptide: MNVLFAGGGTGGHLYPAIAMAGELRKLVPDVVISFVGTTGGIEATEVPRLGYRLHLIPVRGLKRGRALADIVANIGVIADFVAALGRAAALIAREAPDVVVGTGGFVSAPLLLAAQLMRKKTLIQEQNAFPGVTTKLLAALASEVHLSFDDARRFIRNKKRLFVTGNPARSFALPQQVAAREYFALSEERPTLLVFGGSRGARSINNAVLEGVDLITASANLVWQTGALDFERIKSKMQPSPYIWVAPYIEEMGVAYGAADLVLCRAGASSLAELTNLGKPSVLVPYPYATGDHQRHNARALVTGGAAMLVEDDRLGQQASIKNILELLHDKERLKRMGAASRKLAYPDSAHQLALRIISLAKKN.

Residues 10–12 (TGG), Asn128, Arg170, Ser199, Ile250, and Gln295 each bind UDP-N-acetyl-alpha-D-glucosamine.

This sequence belongs to the glycosyltransferase 28 family. MurG subfamily.

The protein localises to the cell inner membrane. The catalysed reaction is di-trans,octa-cis-undecaprenyl diphospho-N-acetyl-alpha-D-muramoyl-L-alanyl-D-glutamyl-meso-2,6-diaminopimeloyl-D-alanyl-D-alanine + UDP-N-acetyl-alpha-D-glucosamine = di-trans,octa-cis-undecaprenyl diphospho-[N-acetyl-alpha-D-glucosaminyl-(1-&gt;4)]-N-acetyl-alpha-D-muramoyl-L-alanyl-D-glutamyl-meso-2,6-diaminopimeloyl-D-alanyl-D-alanine + UDP + H(+). It functions in the pathway cell wall biogenesis; peptidoglycan biosynthesis. Its function is as follows. Cell wall formation. Catalyzes the transfer of a GlcNAc subunit on undecaprenyl-pyrophosphoryl-MurNAc-pentapeptide (lipid intermediate I) to form undecaprenyl-pyrophosphoryl-MurNAc-(pentapeptide)GlcNAc (lipid intermediate II). The chain is UDP-N-acetylglucosamine--N-acetylmuramyl-(pentapeptide) pyrophosphoryl-undecaprenol N-acetylglucosamine transferase from Pelodictyon phaeoclathratiforme (strain DSM 5477 / BU-1).